Reading from the N-terminus, the 2179-residue chain is Axotactin (2179 aa).

Positions 1–18 (MAFPYIWALLPLICSASG) are cleaved as a signal peptide. Residues 19–1816 (LSLPNMTSTD…DENKQEDSTQ (1798 aa)) are Extracellular-facing. Residues N23 and N52 are each glycosylated (N-linked (GlcNAc...) asparagine). The disordered stretch occupies residues 59 to 107 (GGLAGSSTGGQSLPDTGGGNSAGGSPAGGSSGTGGGGSNSGISGNNSAM). Residues 74–97 (TGGGNSAGGSPAGGSSGTGGGGSN) show a composition bias toward gly residues. N103 carries an N-linked (GlcNAc...) asparagine glycan. The BPTI/Kunitz inhibitor domain maps to 119–170 (CAGPGDPGPCKQYIYKWRYEPTTNECTNFIWGGCEGNPQNRFGTEAECLFHC). 3 disulfides stabilise this stretch: C119–C170, C128–C152, and C144–C166. The segment at 201–220 (YTQSPAQSPDGMGGAEGGDG) is disordered. The span at 211–220 (GMGGAEGGDG) shows a compositional bias: gly residues. The Laminin G-like 1 domain occupies 242–438 (KTFIFAKNNT…TKHENVNEGC (197 aa)). The N-linked (GlcNAc...) asparagine glycan is linked to N249. Cystine bridges form between C405–C438, C442–C455, C449–C464, and C466–C476. The EGF-like 1 domain occupies 439-477 (SDMCESRHNLCFVGSRCINHYGGISCDCFGTHYEGEHCD). 2 Laminin G-like domains span residues 481–664 (ATII…AEFV) and 660–839 (EAEF…LDNC). N-linked (GlcNAc...) asparagine glycans are attached at residues N542, N571, and N741. 4 disulfide bridges follow: C808/C839, C845/C857, C851/C866, and C868/C878. An EGF-like 2 domain is found at 841 to 879 (YIDPCKRPNTCEHGGKCFVKDDRVTCDCKHTGYIGKNCH). N-linked (GlcNAc...) asparagine glycans are attached at residues N925, N1000, N1019, and N1026. The region spanning 1087 to 1259 (YVVTFTTSQS…VHLSEIIKDC (173 aa)) is the Laminin G-like 4 domain. Disulfide bonds link C1231–C1259, C1263–C1274, C1268–C1283, and C1285–C1296. The EGF-like 3 domain maps to 1260 to 1297 (KPSCVPSPCRNGAQCKELWSSFKCVCNNPWAHIGEFCE). One can recognise a Laminin G-like 5 domain in the interval 1316 to 1526 (RNYLSVGATP…PTQEGVLPNC (211 aa)). N-linked (GlcNAc...) asparagine glycosylation occurs at N1393. 4 disulfide bridges follow: C1494/C1526, C1530/C1541, C1535/C1552, and C1554/C1564. The EGF-like 4 domain maps to 1527–1565 (QIKCDAEPCKNGGTCQEHFAEQLSTCDCEHTSFLGEFCS). The region spanning 1569 to 1765 (GADFSGESTL…NPQGVRSAQC (197 aa)) is the Laminin G-like 6 domain. Residues N1667, N1707, N1751, and N1782 are each glycosylated (N-linked (GlcNAc...) asparagine). C1722 and C1765 are disulfide-bonded. A helical membrane pass occupies residues 1817 to 1837 (VVFLTLTSVFVIIVICCLLEV). Residues 1838-2179 (YRSHLAYKKR…TSIDSILSLD (342 aa)) lie on the Cytoplasmic side of the membrane. Disordered stretches follow at residues 1891 to 2141 (YTYK…PTLF) and 2156 to 2179 (SYLG…LSLD). Over residues 1916-1930 (GSATPSQPGTPTALS) the composition is skewed to polar residues. The segment covering 1940–1949 (EEEEEEEDEA) has biased composition (acidic residues). The segment covering 1954–1966 (AAEKSGENEEPPA) has biased composition (basic and acidic residues). 2 stretches are compositionally biased toward polar residues: residues 1969–1981 (TTAS…QAQP) and 2010–2025 (EPSS…QLAQ). Over residues 2064–2079 (PQEHKSRHKATDDTEA) the composition is skewed to basic and acidic residues. Residues 2082–2091 (QQQQQQQQQQ) show a composition bias toward low complexity. Polar residues-rich tracts occupy residues 2092 to 2105 (SFDV…SSLP) and 2165 to 2179 (PRSN…LSLD).

Its subcellular location is the cell projection. It is found in the axon. The protein resides in the membrane. Its function is as follows. May have serine protease inhibitor activity. Might play a role in the glial-neuronal signaling pathway that is important in establishing the electrical properties of axonal membranes. The chain is Axotactin from Drosophila melanogaster (Fruit fly).